The sequence spans 329 residues: Chlorophyllase-1, chloroplastic (329 aa).

The transit peptide at 1–21 (MAAMVDSKPAASVQGTPLLAT) directs the protein to the chloroplast. The short motif at 145 to 149 (GHSRG) is the GXSXG element. The active-site Nucleophile is serine 147. Residues aspartate 169 and histidine 242 each act as charge relay system in the active site.

Belongs to the AB hydrolase superfamily. Lipase family.

Its subcellular location is the plastid. It localises to the chloroplast. It catalyses the reaction a chlorophyll + H2O = a chlorophyllide + phytol + H(+). Its pathway is porphyrin-containing compound metabolism; chlorophyll degradation. In terms of biological role, catalyzes the hydrolysis of ester bond in chlorophyll to yield chlorophyllide and phytol. The sequence is that of Chlorophyllase-1, chloroplastic from Citrus unshiu (Satsuma mandarin).